Consider the following 543-residue polypeptide: Protein B602L (543 aa).

13 consecutive repeat copies span residues 161 to 164 (CAST), 165 to 168 (CAST), 169 to 172 (CAST), 173 to 176 (CAST), 177 to 180 (CADT), 181 to 184 (NVDT), 185 to 188 (CTDT), 189 to 192 (CAST), 193 to 196 (CADT), 197 to 200 (NVDT), 201 to 204 (CAST), 205 to 208 (CADT), and 209 to 212 (CAST). The segment at 161 to 212 (CASTCASTCASTCASTCADTNVDTCTDTCASTCADTNVDTCASTCADTCAST) is 13 X 4 AA tandem repeats of [CN]-[ATV]-[DS]-T.

Belongs to the asfivirus B602L family.

It localises to the host cytoplasm. In terms of biological role, plays an essential role in the assembly of the icosahedral capsid of the virus. Allows the assembly of 3 molecules of hexon protein p72 and formation of a thermostable trimer. This is Protein B602L from African swine fever virus (isolate Pig/Kenya/KEN-50/1950) (ASFV).